The following is a 413-amino-acid chain: Putative competence-damage inducible protein (413 aa).

The protein belongs to the CinA family.

The protein is Putative competence-damage inducible protein of Lacticaseibacillus paracasei (strain ATCC 334 / BCRC 17002 / CCUG 31169 / CIP 107868 / KCTC 3260 / NRRL B-441) (Lactobacillus paracasei).